The chain runs to 531 residues: Tryptophan 6-halogenase ThaL (531 aa).

The FAD site is built by Gly-13, Thr-15, Ala-16, Ala-39, Ile-42, Ile-45, Val-47, and Ala-50. Lys-79 is a catalytic residue. Position 111 (Pro-111) interacts with L-tryptophan. FAD contacts are provided by Met-198 and Leu-349. The chloride site is built by Ser-360 and Gly-361. Ile-362 is an FAD binding site. The L-tryptophan site is built by Tyr-454, Tyr-455, Glu-461, and Phe-465.

It belongs to the flavin-dependent halogenase family. Bacterial tryptophan halogenase subfamily. As to quaternary structure, homodimer. Monomer in solution.

The catalysed reaction is L-tryptophan + FADH2 + chloride + O2 = 6-chloro-L-tryptophan + FAD + 2 H2O. It carries out the reaction D-tryptophan + FADH2 + chloride + O2 = 6-chloro-D-tryptophan + FAD + 2 H2O. Functionally, involved in the biosynthesis of thienodolin, a plant growth-regulating compound. Catalyzes the chlorination of tryptophan (Trp) at C6 position to yield 6-chloro-tryptophan. It is also able to use bromide ions to generate monobrominated Trp. In vitro, accepts a wide range of amides and peptides carrying either L- or D-Trp at the N-terminus. This Streptomyces albogriseolus protein is Tryptophan 6-halogenase ThaL.